The sequence spans 306 residues: Glutamyl-Q tRNA(Asp) synthetase (306 aa).

Residues 29–33 (RFAPS) and Asp65 each bind L-glutamate. The 'HIGH' region motif lies at 32 to 42 (PSPTGPLHLGN). Zn(2+)-binding residues include Cys121, Cys123, Tyr141, and Cys145. Residues Tyr188 and Arg206 each coordinate L-glutamate. The short motif at 244–248 (KLAKR) is the 'KMSKS' region element. Position 247 (Lys247) interacts with ATP.

The protein belongs to the class-I aminoacyl-tRNA synthetase family. GluQ subfamily. It depends on Zn(2+) as a cofactor.

Functionally, catalyzes the tRNA-independent activation of glutamate in presence of ATP and the subsequent transfer of glutamate onto a tRNA(Asp). Glutamate is transferred on the 2-amino-5-(4,5-dihydroxy-2-cyclopenten-1-yl) moiety of the queuosine in the wobble position of the QUC anticodon. The polypeptide is Glutamyl-Q tRNA(Asp) synthetase (Prochlorococcus marinus (strain MIT 9313)).